A 351-amino-acid chain; its full sequence is L-threonine 3-dehydrogenase (351 aa).

Cys39 is a Zn(2+) binding site. Residues Thr41 and His44 each act as charge relay system in the active site. Positions 64, 65, 94, 97, 100, and 108 each coordinate Zn(2+). NAD(+)-binding positions include Ile176, Asp196, Arg201, 271 to 273 (LGI), and 295 to 296 (IY).

This sequence belongs to the zinc-containing alcohol dehydrogenase family. In terms of assembly, homotetramer. Zn(2+) is required as a cofactor.

It is found in the cytoplasm. It carries out the reaction L-threonine + NAD(+) = (2S)-2-amino-3-oxobutanoate + NADH + H(+). The protein operates within amino-acid degradation; L-threonine degradation via oxydo-reductase pathway; glycine from L-threonine: step 1/2. Catalyzes the NAD(+)-dependent oxidation of L-threonine to 2-amino-3-ketobutyrate. The sequence is that of L-threonine 3-dehydrogenase from Francisella tularensis subsp. holarctica (strain OSU18).